The sequence spans 568 residues: Zinc finger protein 768 (568 aa).

Residues 1 to 16 (MEREASSWGLESRDVH) are compositionally biased toward basic and acidic residues. 3 disordered regions span residues 1 to 223 (MERE…SLGV), 228 to 247 (SFTQ…FDMP), and 264 to 287 (LNLT…QGPR). Serine 17, serine 23, and serine 27 each carry phosphoserine. Threonine 35 bears the Phosphothreonine mark. Phosphoserine is present on residues serine 36, serine 65, serine 72, serine 79, serine 86, serine 93, serine 100, serine 107, serine 114, serine 121, serine 128, serine 135, and serine 149. Over residues 62-80 (EPQSPEFEPQSPEFESQSP) the composition is skewed to low complexity. Positions 110 to 122 (SDPQSPEFESQSP) are enriched in polar residues. Phosphotyrosine is present on tyrosine 152. Serine 154 carries the phosphoserine modification. Residues 159–186 (FESQSPGYESQSPGYEPQNSGDGVQNSE) are compositionally biased toward polar residues. Residue threonine 189 is modified to Phosphothreonine. Phosphoserine is present on serine 191. Residues 289–311 (NICGICGKSFGRGSTLIQHQRIH) form a C2H2-type 1 zinc finger. Position 312 is a phosphothreonine (threonine 312). Phosphotyrosine is present on tyrosine 317. C2H2-type zinc fingers lie at residues 317-339 (YKCE…QRTH), 345-367 (YKCP…QRTH), 373-395 (YKCP…QRTH), and 401-423 (YSCP…QRVH). Residues serine 323 and serine 327 each carry the phosphoserine modification. Position 424 is a phosphothreonine (threonine 424). C2H2-type zinc fingers lie at residues 429 to 451 (FSCG…ARSH), 457 to 479 (FKCP…ARTH), 485 to 507 (YSCP…QRSH), 513 to 535 (YRCA…HRVH), and 541 to 563 (YKCD…QRTH). Serine 470 carries the phosphoserine modification.

It belongs to the krueppel C2H2-type zinc-finger protein family. In terms of assembly, interacts (via zinc-finger domains) with TP53 (via N-terminus); interaction might be facilitated by TP53 oligomerization state. Interacts with ELP3. In terms of processing, may be phosphorylated at residue 'Ser-5' of the tandem heptapeptide repeats in the N-terminus. Phosphorylation might be increased upon RAS pathway activation and negatively regulate protein stability.

It is found in the nucleus. The protein resides in the chromosome. Functionally, binds to mammalian-wide interspersed repeat (MIRs) sequences in euchromatin and promoter regions of genes at the consensus sequence 5'-GCTGTGTG-[N20]-CCTCTCTG-3', consisting of two anchor regions connected by a linker region; the linker region probably does not contribute to the binding specificity. Required for cell homeostasis. May be involved in transcriptional regulation. In Mus musculus (Mouse), this protein is Zinc finger protein 768 (Znf768).